The following is a 440-amino-acid chain: Xaa-Pro dipeptidase (440 aa).

Mn(2+) is bound by residues Asp246, Asp257, His337, Glu382, and Glu421.

This sequence belongs to the peptidase M24B family. Bacterial-type prolidase subfamily. Mn(2+) is required as a cofactor.

It carries out the reaction Xaa-L-Pro dipeptide + H2O = an L-alpha-amino acid + L-proline. Its function is as follows. Splits dipeptides with a prolyl residue in the C-terminal position. The sequence is that of Xaa-Pro dipeptidase from Aeromonas hydrophila subsp. hydrophila (strain ATCC 7966 / DSM 30187 / BCRC 13018 / CCUG 14551 / JCM 1027 / KCTC 2358 / NCIMB 9240 / NCTC 8049).